We begin with the raw amino-acid sequence, 77 residues long: Putative defensin-like protein 118 (77 aa).

Positions 1–25 (MSKSTILAIFMIVLVLGKVTKETQG) are cleaved as a signal peptide. 4 cysteine pairs are disulfide-bonded: Cys-29–Cys-75, Cys-39–Cys-58, Cys-44–Cys-69, and Cys-48–Cys-71.

It belongs to the DEFL family.

The protein localises to the secreted. The chain is Putative defensin-like protein 118 (LCR52) from Arabidopsis thaliana (Mouse-ear cress).